Here is a 440-residue protein sequence, read N- to C-terminus: Tol-Pal system protein TolB (440 aa).

The N-terminal stretch at 1 to 21 (MKIFGKWLLVTLLICSMPVKA) is a signal peptide.

Belongs to the TolB family. The Tol-Pal system is composed of five core proteins: the inner membrane proteins TolA, TolQ and TolR, the periplasmic protein TolB and the outer membrane protein Pal. They form a network linking the inner and outer membranes and the peptidoglycan layer.

The protein localises to the periplasm. Functionally, part of the Tol-Pal system, which plays a role in outer membrane invagination during cell division and is important for maintaining outer membrane integrity. The sequence is that of Tol-Pal system protein TolB from Shewanella halifaxensis (strain HAW-EB4).